The following is a 299-amino-acid chain: DNA-binding transcriptional activator HetR (299 aa).

The DNA-binding domain stretch occupies residues 1–98; it reads MSNDIDLIKR…GKLLKTLGSQ (98 aa). DNA-binding positions include 34–40 and 60–76; these read RHGAFLD and NLRM…KRVK. The flap domain stretch occupies residues 99–216; it reads EPRYLIQFPY…FYALTRPFYA (118 aa). The active site involves serine 152. Residue 179–181 participates in DNA binding; the sequence is SEA. The interval 217–299 is hood domain; that stretch reads PADDQERTYI…LQMVFGRKED (83 aa).

It belongs to the peptidase S48 family. Upon expression in E.coli most protein is monomeric, although varying amounts of homodimer can be seen. Homodimer; disulfide-linked. Homodimer. Binds the 6 residue C-terminal peptide of PatS; one peptide binds to each subunit. In bacterial two-hybrid assays interacts robustly with itself, Alr2902 and Alr3234 and more weakly with Als1930. Probably autodegrades.

Its activity is regulated as follows. Protease activity is inhibited by PMSF, suggesting this is a serine protease. Controls heterocyst differentiation. Dimerization is required for DNA-binding. Has both a protease and a DNA-binding activity. In terms of biological role, controls heterocyst differentiation; increased expression leads to more heterocysts than usual. Has protease activity. Binds the promoter regions of hetR, hepA and patS and is required for their expression. Dimerization is required for DNA-binding, DNA-binding is inhibited by the PatS6 peptide. Binds the inverted repeat 5'-GTAGGCGAGGGGTCTAACCCCTCATTACC-3' found in the hetP promoter, required for expression of hetP. This Nostoc sp. (strain PCC 7120 / SAG 25.82 / UTEX 2576) protein is DNA-binding transcriptional activator HetR.